A 1402-amino-acid chain; its full sequence is DNA-directed RNA polymerase subunit beta' (1402 aa).

Zn(2+) contacts are provided by C73, C75, C88, and C91. The Mg(2+) site is built by D464, D466, and D468. Positions 812, 886, 893, and 896 each coordinate Zn(2+).

It belongs to the RNA polymerase beta' chain family. In terms of assembly, the RNAP catalytic core consists of 2 alpha, 1 beta, 1 beta' and 1 omega subunit. When a sigma factor is associated with the core the holoenzyme is formed, which can initiate transcription. Requires Mg(2+) as cofactor. The cofactor is Zn(2+).

The catalysed reaction is RNA(n) + a ribonucleoside 5'-triphosphate = RNA(n+1) + diphosphate. Functionally, DNA-dependent RNA polymerase catalyzes the transcription of DNA into RNA using the four ribonucleoside triphosphates as substrates. The polypeptide is DNA-directed RNA polymerase subunit beta' (Rhodopseudomonas palustris (strain ATCC BAA-98 / CGA009)).